The chain runs to 149 residues: Nucleoside diphosphate kinase (149 aa).

ATP contacts are provided by K9, F57, R85, T91, R102, and N112. Residue H115 is the Pros-phosphohistidine intermediate of the active site.

This sequence belongs to the NDK family. Mg(2+) is required as a cofactor.

It localises to the cytoplasm. The enzyme catalyses a 2'-deoxyribonucleoside 5'-diphosphate + ATP = a 2'-deoxyribonucleoside 5'-triphosphate + ADP. It catalyses the reaction a ribonucleoside 5'-diphosphate + ATP = a ribonucleoside 5'-triphosphate + ADP. Major role in the synthesis of nucleoside triphosphates other than ATP. The ATP gamma phosphate is transferred to the NDP beta phosphate via a ping-pong mechanism, using a phosphorylated active-site intermediate. In Methanoculleus marisnigri (strain ATCC 35101 / DSM 1498 / JR1), this protein is Nucleoside diphosphate kinase.